The chain runs to 98 residues: NADH-quinone oxidoreductase subunit K (98 aa).

Helical transmembrane passes span 1–21, 27–47, and 59–79; these read MGHLLGLGAVLFCISLAGIFL, IVLLMSIELMLLSVNVNFIAF, and FVFFILTVAAAEAAIGLAILV.

This sequence belongs to the complex I subunit 4L family. NDH-1 is composed of 14 different subunits. Subunits NuoA, H, J, K, L, M, N constitute the membrane sector of the complex.

It localises to the cell inner membrane. The catalysed reaction is a quinone + NADH + 5 H(+)(in) = a quinol + NAD(+) + 4 H(+)(out). NDH-1 shuttles electrons from NADH, via FMN and iron-sulfur (Fe-S) centers, to quinones in the respiratory chain. The immediate electron acceptor for the enzyme in this species is believed to be ubiquinone. Couples the redox reaction to proton translocation (for every two electrons transferred, four hydrogen ions are translocated across the cytoplasmic membrane), and thus conserves the redox energy in a proton gradient. The chain is NADH-quinone oxidoreductase subunit K from Xanthomonas oryzae pv. oryzae (strain PXO99A).